Here is a 61-residue protein sequence, read N- to C-terminus: Putative defensin-like protein 72 (61 aa).

Intrachain disulfides connect Cys21/Cys59, Cys25/Cys48, Cys34/Cys57, and Cys38/Cys58.

It belongs to the DEFL family.

This is Putative defensin-like protein 72 from Arabidopsis thaliana (Mouse-ear cress).